Reading from the N-terminus, the 437-residue chain is Isthmin-2 (437 aa).

The first 25 residues, 1 to 25 (MLRARKGLWVLLSVLLAFWIERAIS), serve as a signal peptide directing secretion. The disordered stretch occupies residues 156 to 191 (DSGEDGTGQAEDEEDDYDYDSGEPIPSGLGKTDGDW). The span at 165-176 (AEDEEDDYDYDS) shows a compositional bias: acidic residues. One can recognise a TSP type-1 domain in the interval 197–242 (EEKEEEWSTWSPCSVTCGHGNQTRSRSCGDFCTSTESQSCDLVPCP). Cystine bridges form between cysteine 209–cysteine 236, cysteine 213–cysteine 241, and cysteine 224–cysteine 228. Residue asparagine 217 is glycosylated (N-linked (GlcNAc...) asparagine). N-linked (GlcNAc...) asparagine glycosylation is found at asparagine 258 and asparagine 349. Residues 262-425 (PYGTDVGSCE…LHCMENPQQD (164 aa)) form the AMOP domain.

The protein belongs to the isthmin family.

Its subcellular location is the secreted. In Danio rerio (Zebrafish), this protein is Isthmin-2 (ism2).